A 183-amino-acid chain; its full sequence is Ribosome rescue factor SmrB (183 aa).

In terms of domain architecture, Smr spans 98 to 173 (LDLHGLTQLQ…GDAALLVLIE (76 aa)).

The protein belongs to the SmrB family. As to quaternary structure, associates with collided ribosomes, but not with correctly translating polysomes.

Its function is as follows. Acts as a ribosome collision sensor. Detects stalled/collided disomes (pairs of ribosomes where the leading ribosome is stalled and a second ribosome has collided with it) and endonucleolytically cleaves mRNA at the 5' boundary of the stalled ribosome. Stalled/collided disomes form a new interface (primarily via the 30S subunits) that binds SmrB. Cleaved mRNA becomes available for tmRNA ligation, leading to ribosomal subunit dissociation and rescue of stalled ribosomes. The protein is Ribosome rescue factor SmrB of Escherichia coli O7:K1 (strain IAI39 / ExPEC).